The chain runs to 537 residues: Glucans biosynthesis protein D 2 (537 aa).

The tat-type signal signal peptide spans 1–28 (MVTRRHLLASASLSATLAALGITPEALA).

The protein belongs to the OpgD/OpgG family. Predicted to be exported by the Tat system. The position of the signal peptide cleavage has not been experimentally proven.

The protein resides in the periplasm. It participates in glycan metabolism; osmoregulated periplasmic glucan (OPG) biosynthesis. Functionally, probably involved in the control of the structural glucose backbone of osmoregulated periplasmic glucans (OPGs). This chain is Glucans biosynthesis protein D 2 (opgD2), found in Ralstonia nicotianae (strain ATCC BAA-1114 / GMI1000) (Ralstonia solanacearum).